Consider the following 149-residue polypeptide: Large ribosomal subunit protein bL9 (149 aa).

It belongs to the bacterial ribosomal protein bL9 family.

Its function is as follows. Binds to the 23S rRNA. This chain is Large ribosomal subunit protein bL9, found in Actinobacillus pleuropneumoniae serotype 3 (strain JL03).